We begin with the raw amino-acid sequence, 333 residues long: Dioxygenase cnsJ (333 aa).

The Fe cation site is built by His153, Asp155, and His235. A disordered region spans residues 309-333 (NAQPEGEDDGGMKPNEGEHVVEAQI). Positions 323–333 (NEGEHVVEAQI) are enriched in basic and acidic residues.

It belongs to the PhyH family. Homodimer. Fe cation is required as a cofactor.

The protein operates within alkaloid biosynthesis. Its function is as follows. Dioxygenase; part of the gene cluster that mediates the biosynthesis of communesins, a prominent class of indole alkaloids with great potential as pharmaceuticals. Communesins are biosynthesized by the coupling of tryptamine and aurantioclavine, two building blocks derived from L-tryptophan. The L-tryptophan decarboxylase cnsB converts L-tryptophan to tryptamine, whereas the tryptophan dimethylallyltransferase cnsF converts L-tryptophan to 4-dimethylallyl tryptophan which is further transformed to aurantioclavine by the aurantioclavine synthase cnsA, probably aided by the catalase cnsD. The cytochrome P450 monooxygenase cnsC catalyzes the heterodimeric coupling between the two different indole moieties, tryptamine and aurantioclavine, to construct vicinal quaternary stereocenters and yield the heptacyclic communesin scaffold. The O-methyltransferase cnsE then methylates the communesin scaffold to produce communesin K, the simplest characterized communesin that contains the heptacyclic core. The dioxygenase cnsJ converts communesin K into communesin I. Acylation to introduce the hexadienyl group at position N16 of communesin I by the acyltransferase cnsK leads to the production of communesin B. The hexadienyl group is produced by the highly reducing polyketide synthase cnsI, before being hydrolytically removed from cnsI by the serine hydrolase cnsH, converted into hexadienyl-CoA by the CoA ligase cnsG, and then transferred to communesin I by cnsK. Surprisingly, cnsK may also be a promiscuous acyltransferase that can tolerate a range of acyl groups, including acetyl-, propionyl-, and butyryl-CoA, which lead to communesins A, G and H respectively. The roles of the alpha-ketoglutarate-dependent dioxygenases cnsM and cnsP have still to be determined. The sequence is that of Dioxygenase cnsJ from Penicillium expansum (Blue mold rot fungus).